We begin with the raw amino-acid sequence, 565 residues long: Putative ribonucleoside-diphosphate reductase large subunit (565 aa).

Residues Ser60, 74 to 75, Gly103, 256 to 260, and 400 to 404 contribute to the substrate site; these read SC, NLCNE, and PNANS. Cys75 and Cys273 are joined by a disulfide. The active-site Proton acceptor is the Asn256. Residue Cys258 is the Cysteine radical intermediate of the active site. Catalysis depends on Glu260, which acts as the Proton acceptor.

It belongs to the ribonucleoside diphosphate reductase large chain family. In terms of assembly, heterotetramer composed of a homodimer of the large subunit (R1) and a homodimer of the small subunit (R2). Larger multisubunit protein complex are also active, composed of (R1)n(R2)n.

It catalyses the reaction a 2'-deoxyribonucleoside 5'-diphosphate + [thioredoxin]-disulfide + H2O = a ribonucleoside 5'-diphosphate + [thioredoxin]-dithiol. Its activity is regulated as follows. Under complex allosteric control mediated by deoxynucleoside triphosphates and ATP binding. The type of nucleotide bound at the specificity site determines substrate preference. It seems probable that ATP makes the enzyme reduce CDP and UDP, dGTP favors ADP reduction and dTTP favors GDP reduction. Its function is as follows. Ribonucleoside-diphosphate reductase holoenzyme provides the precursors necessary for viral DNA synthesis. Allows virus growth in non-dividing cells. Catalyzes the biosynthesis of deoxyribonucleotides from the corresponding ribonucleotides. The sequence is that of Putative ribonucleoside-diphosphate reductase large subunit from Frog virus 3 (isolate Goorha) (FV-3).